We begin with the raw amino-acid sequence, 394 residues long: Chorismate synthase (394 aa).

The NADP(+) site is built by R40 and R46. FMN-binding positions include R135–S137, Q255–A256, G302, K317–S321, and R343.

Belongs to the chorismate synthase family. Homotetramer. The cofactor is FMNH2.

The catalysed reaction is 5-O-(1-carboxyvinyl)-3-phosphoshikimate = chorismate + phosphate. Its pathway is metabolic intermediate biosynthesis; chorismate biosynthesis; chorismate from D-erythrose 4-phosphate and phosphoenolpyruvate: step 7/7. Its function is as follows. Catalyzes the anti-1,4-elimination of the C-3 phosphate and the C-6 proR hydrogen from 5-enolpyruvylshikimate-3-phosphate (EPSP) to yield chorismate, which is the branch point compound that serves as the starting substrate for the three terminal pathways of aromatic amino acid biosynthesis. This reaction introduces a second double bond into the aromatic ring system. The polypeptide is Chorismate synthase (Frankia alni (strain DSM 45986 / CECT 9034 / ACN14a)).